Consider the following 217-residue polypeptide: 3,4-dihydroxy-2-butanone 4-phosphate synthase (217 aa).

D-ribulose 5-phosphate contacts are provided by residues 37-38 (RE), Asp-42, 150-154 (RRGHT), and Glu-174. Glu-38 serves as a coordination point for Mg(2+). A Mg(2+)-binding site is contributed by His-153.

It belongs to the DHBP synthase family. In terms of assembly, homodimer. Mg(2+) is required as a cofactor. The cofactor is Mn(2+).

It catalyses the reaction D-ribulose 5-phosphate = (2S)-2-hydroxy-3-oxobutyl phosphate + formate + H(+). Its pathway is cofactor biosynthesis; riboflavin biosynthesis; 2-hydroxy-3-oxobutyl phosphate from D-ribulose 5-phosphate: step 1/1. Its function is as follows. Catalyzes the conversion of D-ribulose 5-phosphate to formate and 3,4-dihydroxy-2-butanone 4-phosphate. This is 3,4-dihydroxy-2-butanone 4-phosphate synthase from Shewanella oneidensis (strain ATCC 700550 / JCM 31522 / CIP 106686 / LMG 19005 / NCIMB 14063 / MR-1).